The following is a 471-amino-acid chain: tRNA-2-methylthio-N(6)-dimethylallyladenosine synthase (471 aa).

Positions 29–146 constitute an MTTase N-terminal domain; it reads KKFHIKTYGC…LPELIAKVNR (118 aa). Residues cysteine 38, cysteine 74, cysteine 109, cysteine 187, cysteine 191, and cysteine 194 each coordinate [4Fe-4S] cluster. The 233-residue stretch at 173-405 folds into the Radical SAM core domain; it reads RVPQSSAFLS…QQLLKEKQLE (233 aa). In terms of domain architecture, TRAM spans 408–467; that stretch reads KKMIGKTVTVLFDKKHPDKISGRTEYMQQVFSDDSNLLDKIVTMRVEDASTFTLKCTAED.

It belongs to the methylthiotransferase family. MiaB subfamily. As to quaternary structure, monomer. The cofactor is [4Fe-4S] cluster.

It localises to the cytoplasm. It carries out the reaction N(6)-dimethylallyladenosine(37) in tRNA + (sulfur carrier)-SH + AH2 + 2 S-adenosyl-L-methionine = 2-methylsulfanyl-N(6)-dimethylallyladenosine(37) in tRNA + (sulfur carrier)-H + 5'-deoxyadenosine + L-methionine + A + S-adenosyl-L-homocysteine + 2 H(+). In terms of biological role, catalyzes the methylthiolation of N6-(dimethylallyl)adenosine (i(6)A), leading to the formation of 2-methylthio-N6-(dimethylallyl)adenosine (ms(2)i(6)A) at position 37 in tRNAs that read codons beginning with uridine. The protein is tRNA-2-methylthio-N(6)-dimethylallyladenosine synthase of Neorickettsia sennetsu (strain ATCC VR-367 / Miyayama) (Ehrlichia sennetsu).